A 113-amino-acid chain; its full sequence is Large ribosomal subunit protein P1 (113 aa).

Residues 84 to 113 (APAAAAKKETKKEEVKKEESDDDMGMGLFD) are disordered. A compositionally biased stretch (basic and acidic residues) spans 89 to 102 (AKKETKKEEVKKEE).

This sequence belongs to the eukaryotic ribosomal protein P1/P2 family. P1 and P2 exist as dimers at the large ribosomal subunit.

Plays an important role in the elongation step of protein synthesis. This is Large ribosomal subunit protein P1 (rplp1) from Dictyostelium discoideum (Social amoeba).